Here is a 566-residue protein sequence, read N- to C-terminus: Glutamate--tRNA ligase (566 aa).

The 'HIGH' region signature appears at 104-114 (PNPDGPLHLGN).

It belongs to the class-I aminoacyl-tRNA synthetase family. Glutamate--tRNA ligase type 2 subfamily.

The protein localises to the cytoplasm. The enzyme catalyses tRNA(Glu) + L-glutamate + ATP = L-glutamyl-tRNA(Glu) + AMP + diphosphate. Catalyzes the attachment of glutamate to tRNA(Glu) in a two-step reaction: glutamate is first activated by ATP to form Glu-AMP and then transferred to the acceptor end of tRNA(Glu). The polypeptide is Glutamate--tRNA ligase (Metallosphaera sedula (strain ATCC 51363 / DSM 5348 / JCM 9185 / NBRC 15509 / TH2)).